A 496-amino-acid polypeptide reads, in one-letter code: GTPase Der (496 aa).

EngA-type G domains follow at residues 3–166 (PVIA…VGKF) and 209–382 (VKLA…TCAT). Residues 9–16 (GRPNVGKS), 56–60 (DTGGI), 118–121 (NKTD), 215–222 (GRPNVGKS), 262–266 (DTAGV), and 327–330 (NKWD) contribute to the GTP site. The KH-like domain occupies 383–467 (RRVGTSMLTR…PIRIQFKEGE (85 aa)).

This sequence belongs to the TRAFAC class TrmE-Era-EngA-EngB-Septin-like GTPase superfamily. EngA (Der) GTPase family. Associates with the 50S ribosomal subunit.

Its function is as follows. GTPase that plays an essential role in the late steps of ribosome biogenesis. The polypeptide is GTPase Der (Proteus mirabilis (strain HI4320)).